A 167-amino-acid chain; its full sequence is Small ribosomal subunit protein uS7c (167 aa).

This sequence belongs to the universal ribosomal protein uS7 family. In terms of assembly, part of the 30S ribosomal subunit.

It is found in the plastid. The protein localises to the chloroplast. One of the primary rRNA binding proteins, it binds directly to 16S rRNA where it nucleates assembly of the head domain of the 30S subunit. In Tetradesmus obliquus (Green alga), this protein is Small ribosomal subunit protein uS7c (rps7).